We begin with the raw amino-acid sequence, 418 residues long: Elongation factor 1-gamma 1 (418 aa).

The GST N-terminal domain occupies 1-82 (MALVLHTFDG…YVTRSKSDNP (82 aa)). The GST C-terminal domain occupies 87–213 (SLIEYAHIEQ…GDVKQADSVP (127 aa)). Positions 211 to 265 (SVPQVQKKAAAPKEQKPKEAKKEAPKEAPKPKAAEKPEEEEEAPKPKPKNPLDLL) are disordered. Over residues 221–246 (APKEQKPKEAKKEAPKEAPKPKAAEK) the composition is skewed to basic and acidic residues. One can recognise an EF-1-gamma C-terminal domain in the interval 258–418 (PKNPLDLLPP…EALLDAKCFK (161 aa)).

EF-1 is composed of four subunits: alpha, beta, delta, and gamma.

Probably plays a role in anchoring the complex to other cellular components. The protein is Elongation factor 1-gamma 1 of Oryza sativa subsp. japonica (Rice).